The chain runs to 71 residues: UPF0346 protein BcerKBAB4_2120 (71 aa).

It belongs to the UPF0346 family.

This chain is UPF0346 protein BcerKBAB4_2120, found in Bacillus mycoides (strain KBAB4) (Bacillus weihenstephanensis).